Here is a 535-residue protein sequence, read N- to C-terminus: Probable fucosyltransferase 4 (535 aa).

The Cytoplasmic portion of the chain corresponds to 1–20 (MYHIFQISGEVIKGLGLKTK). Residues 21–41 (ILITIVFSTLLILSVMLLSFS) traverse the membrane as a helical; Signal-anchor for type II membrane protein segment. Residues 42-535 (NNFNNKLFAA…IWGLKLFDEL (494 aa)) lie on the Lumenal side of the membrane. 5 N-linked (GlcNAc...) asparagine glycosylation sites follow: Asn136, Asn226, Asn230, Asn377, and Asn409.

Belongs to the glycosyltransferase 37 family. Expressed in roots, stems, leaves, flowers, siliques and seedlings.

The protein resides in the golgi apparatus. The protein localises to the golgi stack membrane. It functions in the pathway protein modification; protein glycosylation. In terms of biological role, may be involved in cell wall biosynthesis. May act as a fucosyltransferase. The chain is Probable fucosyltransferase 4 (FUT4) from Arabidopsis thaliana (Mouse-ear cress).